Consider the following 532-residue polypeptide: UDP-N-acetylmuramoylalanine--D-glutamate ligase (532 aa).

124 to 130 (GSKGKSS) is an ATP binding site.

Belongs to the MurCDEF family.

Its subcellular location is the cytoplasm. The catalysed reaction is UDP-N-acetyl-alpha-D-muramoyl-L-alanine + D-glutamate + ATP = UDP-N-acetyl-alpha-D-muramoyl-L-alanyl-D-glutamate + ADP + phosphate + H(+). It functions in the pathway cell wall biogenesis; peptidoglycan biosynthesis. Cell wall formation. Catalyzes the addition of glutamate to the nucleotide precursor UDP-N-acetylmuramoyl-L-alanine (UMA). The polypeptide is UDP-N-acetylmuramoylalanine--D-glutamate ligase (murD) (Treponema pallidum (strain Nichols)).